The chain runs to 267 residues: MTPNIHTVILDIEGTTTPISFVHDVLFPYIRDNLVRHINQKWGSEELKQDIKELYKLYLEDNKASELVVNNQFNTPEILNPDDESTDKEKLIESVIRNVIYQMDNDRKSTPLKQLQGHMWLEGYENELVKGVVFPEVPKAFENWNLNHIDIYIYSSGSIAAQKLLFNYSNFGSLLPYIKGHFDTTIGGKLHPSSYEKILSTINNGSPNSYLFVTDSILEAKAARESGLNVCLSIRDGNPPIVDRELLNTFDQVSSFDQLFNKFNFKN.

Mg(2+)-binding residues include D11 and E13. Substrate-binding positions include 155–156 (SS) and K189. Residue D215 coordinates Mg(2+).

It belongs to the HAD-like hydrolase superfamily. MasA/MtnC family. As to quaternary structure, monomer. Mg(2+) is required as a cofactor.

It localises to the cytoplasm. The protein localises to the nucleus. The enzyme catalyses 5-methylsulfanyl-2,3-dioxopentyl phosphate + H2O = 1,2-dihydroxy-5-(methylsulfanyl)pent-1-en-3-one + phosphate. Its pathway is amino-acid biosynthesis; L-methionine biosynthesis via salvage pathway; L-methionine from S-methyl-5-thio-alpha-D-ribose 1-phosphate: step 3/6. It participates in amino-acid biosynthesis; L-methionine biosynthesis via salvage pathway; L-methionine from S-methyl-5-thio-alpha-D-ribose 1-phosphate: step 4/6. In terms of biological role, bifunctional enzyme that catalyzes the enolization of 2,3-diketo-5-methylthiopentyl-1-phosphate (DK-MTP-1-P) into the intermediate 2-hydroxy-3-keto-5-methylthiopentenyl-1-phosphate (HK-MTPenyl-1-P), which is then dephosphorylated to form the acireductone 1,2-dihydroxy-3-keto-5-methylthiopentene (DHK-MTPene). The chain is Enolase-phosphatase E1 (enoph1) from Dictyostelium discoideum (Social amoeba).